A 507-amino-acid chain; its full sequence is MKLAYWMYAGPAHIGTLRVASSFKKVHAIMHAPLGDDYFNVMRSMLERDRDFTPVTASVVDRHVLARGSQEKVVENITRKDREEKPDLVILTPTCTSSILQEDLQNFVSRASIETEADVLLADVNHYRVNELQASDRTLEQIVTFYMEKAKSNNILTKKTIKPSVNIIGAVSLGFHNQHDIAELKRLFHDLDIQINQVIPENASVHDLKNLPSAWFNFVPYRETGLMTALYLKKEFNMPYIDITPMGIVQTATSIRSIQKILNALGATVNYEKYIDEQTRFISQSAWFSRSIDCQNLTGKKAIVFGDATHAAAITRILHQEMGIHVAWCGTYCKYDEEWFREQVKGFCDEVIISDDHGLIGDLIAKTEPAAIFGTQMERHIGKRLNIPCGVISSPVHIQNFPLSYRPFLGYEGTNQIADLVYNSFTLGMEDHLLEIFGGHDTTEALSVGISADDSLNWSDEAQKELSKIPGFVRGKVKRNTEKFARDCSKNLITLELMYEAKEKVSS.

Position 36 (Asp-36) interacts with [4Fe-4S] cluster. The active-site Proton donor is the Asp-293. 428–429 (GM) is a binding site for substrate.

The protein belongs to the ChlB/BchB/BchZ family. Protochlorophyllide reductase is composed of three subunits; ChlL, ChlN and ChlB. Forms a heterotetramer of two ChlB and two ChlN subunits. [4Fe-4S] cluster serves as cofactor.

The protein localises to the plastid. The protein resides in the chloroplast. The catalysed reaction is chlorophyllide a + oxidized 2[4Fe-4S]-[ferredoxin] + 2 ADP + 2 phosphate = protochlorophyllide a + reduced 2[4Fe-4S]-[ferredoxin] + 2 ATP + 2 H2O. It functions in the pathway porphyrin-containing compound metabolism; chlorophyll biosynthesis (light-independent). Its function is as follows. Component of the dark-operative protochlorophyllide reductase (DPOR) that uses Mg-ATP and reduced ferredoxin to reduce ring D of protochlorophyllide (Pchlide) to form chlorophyllide a (Chlide). This reaction is light-independent. The NB-protein (ChlN-ChlB) is the catalytic component of the complex. The sequence is that of Light-independent protochlorophyllide reductase subunit B from Porphyra purpurea (Red seaweed).